We begin with the raw amino-acid sequence, 452 residues long: Transcription factor SMP1 (452 aa).

Positions 3–57 constitute an MADS-box domain; sequence RRKIEIEPIKDDRNRTVTFIKRKAGLFKKAHELSVLCQVDIAVIILGSNNTFYEY. A DNA-binding region (mef2-type) is located at residues 58–87; sequence SSVDMSNLLNVHQNNTDLPHNIIEPSDYGD. Residues 97–142 are disordered; sequence NERKRRRRRATVLQPASHSGSCTVSSQDSSSVQNNGNLSAPLASND. Positions 115–127 are enriched in low complexity; the sequence is SGSCTVSSQDSSS.

It belongs to the MEF2 family. In terms of assembly, can heterodimerize with RLM1. Interacts with HOG1. Phosphorylated by HOG1.

The protein localises to the nucleus. Functionally, transcription factor that controls part of the HOG1-mediated osmostress responses. Binds to the DNA sequence 5'-ACTACTA[TA](4)TAG-3'. Does not appear to function in the MPK1 pathway. This Saccharomyces cerevisiae (strain ATCC 204508 / S288c) (Baker's yeast) protein is Transcription factor SMP1 (SMP1).